A 132-amino-acid polypeptide reads, in one-letter code: Small ribosomal subunit protein uS8c (132 aa).

Belongs to the universal ribosomal protein uS8 family. In terms of assembly, part of the 30S ribosomal subunit.

It localises to the plastid. The protein localises to the chloroplast. In terms of biological role, one of the primary rRNA binding proteins, it binds directly to 16S rRNA central domain where it helps coordinate assembly of the platform of the 30S subunit. In Phaeodactylum tricornutum (strain CCAP 1055/1), this protein is Small ribosomal subunit protein uS8c (rps8).